Consider the following 763-residue polypeptide: Phosphoglycerol transferase I (763 aa).

A run of 4 helical transmembrane segments spans residues Met1–Ala21, Trp26–Phe46, Ile77–Ile97, and Phe108–Phe128.

This sequence belongs to the OpgB family.

The protein resides in the cell inner membrane. It catalyses the reaction a phosphatidylglycerol + a membrane-derived-oligosaccharide D-glucose = a 1,2-diacyl-sn-glycerol + a membrane-derived-oligosaccharide 6-(glycerophospho)-D-glucose.. Its pathway is glycan metabolism; osmoregulated periplasmic glucan (OPG) biosynthesis. Its function is as follows. Transfers a phosphoglycerol residue from phosphatidylglycerol to the membrane-bound nascent glucan backbones. The chain is Phosphoglycerol transferase I from Escherichia coli O7:K1 (strain IAI39 / ExPEC).